The following is a 425-amino-acid chain: Histidine--tRNA ligase (425 aa).

This sequence belongs to the class-II aminoacyl-tRNA synthetase family. Homodimer.

It is found in the cytoplasm. The catalysed reaction is tRNA(His) + L-histidine + ATP = L-histidyl-tRNA(His) + AMP + diphosphate + H(+). The sequence is that of Histidine--tRNA ligase from Tolumonas auensis (strain DSM 9187 / NBRC 110442 / TA 4).